Reading from the N-terminus, the 183-residue chain is Holliday junction branch migration complex subunit RuvA (183 aa).

The interval 1 to 63 (MIVGLIGVVE…EDAHLLYGFL (63 aa)) is domain I. Residues 64-139 (EEGEKILFER…FFIQDENRPA (76 aa)) are domain II. A region of interest (flexible linker) is located at residue Ala-139. Residues 139–183 (ARNEVFLALESLGFKSAEINQVLKTLKPNLSIEAAIKEALQQLRS) form a domain III region.

This sequence belongs to the RuvA family. Homotetramer. Forms an RuvA(8)-RuvB(12)-Holliday junction (HJ) complex. HJ DNA is sandwiched between 2 RuvA tetramers; dsDNA enters through RuvA and exits via RuvB. An RuvB hexamer assembles on each DNA strand where it exits the tetramer. Each RuvB hexamer is contacted by two RuvA subunits (via domain III) on 2 adjacent RuvB subunits; this complex drives branch migration. In the full resolvosome a probable DNA-RuvA(4)-RuvB(12)-RuvC(2) complex forms which resolves the HJ.

The protein resides in the cytoplasm. The RuvA-RuvB-RuvC complex processes Holliday junction (HJ) DNA during genetic recombination and DNA repair, while the RuvA-RuvB complex plays an important role in the rescue of blocked DNA replication forks via replication fork reversal (RFR). RuvA specifically binds to HJ cruciform DNA, conferring on it an open structure. The RuvB hexamer acts as an ATP-dependent pump, pulling dsDNA into and through the RuvAB complex. HJ branch migration allows RuvC to scan DNA until it finds its consensus sequence, where it cleaves and resolves the cruciform DNA. The chain is Holliday junction branch migration complex subunit RuvA from Helicobacter pylori (strain ATCC 700392 / 26695) (Campylobacter pylori).